A 227-amino-acid chain; its full sequence is Uracil-DNA glycosylase (227 aa).

Residue Asp64 is the Proton acceptor of the active site.

It belongs to the uracil-DNA glycosylase (UDG) superfamily. UNG family.

The protein localises to the cytoplasm. It catalyses the reaction Hydrolyzes single-stranded DNA or mismatched double-stranded DNA and polynucleotides, releasing free uracil.. Its function is as follows. Excises uracil residues from the DNA which can arise as a result of misincorporation of dUMP residues by DNA polymerase or due to deamination of cytosine. This chain is Uracil-DNA glycosylase, found in Erwinia tasmaniensis (strain DSM 17950 / CFBP 7177 / CIP 109463 / NCPPB 4357 / Et1/99).